Consider the following 181-residue polypeptide: UPF0177 protein YbdI (181 aa).

The next 5 helical transmembrane spans lie at 10–30 (ILFLVILFIVLYIAIKTGVFA), 41–61 (LLWLLGFVIVGYILGNIAHYL), 81–101 (FVDSFLPTWFVYILMVVIAPI), 114–134 (FFSHKWLAYILSILLFTLIHT), and 161–181 (SDSIIVHGGYNLMVLIFHIII).

Belongs to the UPF0177 family.

The protein resides in the cell membrane. The protein is UPF0177 protein YbdI (ybdI) of Lactococcus lactis subsp. lactis (strain IL1403) (Streptococcus lactis).